The primary structure comprises 368 residues: tRNA(Met) cytidine acetate ligase (368 aa).

Residues 7–20, Gly-96, Asn-152, and Arg-175 contribute to the ATP site; that span reads IAEF…HKYL.

Belongs to the TmcAL family.

The protein resides in the cytoplasm. The catalysed reaction is cytidine(34) in elongator tRNA(Met) + acetate + ATP = N(4)-acetylcytidine(34) in elongator tRNA(Met) + AMP + diphosphate. Its function is as follows. Catalyzes the formation of N(4)-acetylcytidine (ac(4)C) at the wobble position of elongator tRNA(Met), using acetate and ATP as substrates. First activates an acetate ion to form acetyladenylate (Ac-AMP) and then transfers the acetyl group to tRNA to form ac(4)C34. This chain is tRNA(Met) cytidine acetate ligase, found in Streptococcus pyogenes serotype M5 (strain Manfredo).